We begin with the raw amino-acid sequence, 307 residues long: Fructokinase (307 aa).

It belongs to the carbohydrate kinase PfkB family.

The catalysed reaction is D-fructose + ATP = D-fructose 6-phosphate + ADP + H(+). This Salmonella typhimurium protein is Fructokinase (scrK).